Here is a 363-residue protein sequence, read N- to C-terminus: 3-isopropylmalate dehydrogenase (363 aa).

Residue 78–91 coordinates NAD(+); the sequence is GPKWEHLPPDQQPE. Positions 99, 109, 138, and 227 each coordinate substrate. The Mg(2+) site is built by aspartate 227, aspartate 251, and aspartate 255. 285–297 contributes to the NAD(+) binding site; sequence GSAPDITGKNIAN.

It belongs to the isocitrate and isopropylmalate dehydrogenases family. LeuB type 1 subfamily. As to quaternary structure, homodimer. Requires Mg(2+) as cofactor. It depends on Mn(2+) as a cofactor.

Its subcellular location is the cytoplasm. The enzyme catalyses (2R,3S)-3-isopropylmalate + NAD(+) = 4-methyl-2-oxopentanoate + CO2 + NADH. It participates in amino-acid biosynthesis; L-leucine biosynthesis; L-leucine from 3-methyl-2-oxobutanoate: step 3/4. In terms of biological role, catalyzes the oxidation of 3-carboxy-2-hydroxy-4-methylpentanoate (3-isopropylmalate) to 3-carboxy-4-methyl-2-oxopentanoate. The product decarboxylates to 4-methyl-2 oxopentanoate. In Shigella boydii serotype 4 (strain Sb227), this protein is 3-isopropylmalate dehydrogenase.